The chain runs to 172 residues: ATP synthase subunit b (172 aa).

Residues 13–33 (GINGGDILFQLVMFLILLALL) form a helical membrane-spanning segment.

It belongs to the ATPase B chain family. In terms of assembly, F-type ATPases have 2 components, F(1) - the catalytic core - and F(0) - the membrane proton channel. F(1) has five subunits: alpha(3), beta(3), gamma(1), delta(1), epsilon(1). F(0) has three main subunits: a(1), b(2) and c(10-14). The alpha and beta chains form an alternating ring which encloses part of the gamma chain. F(1) is attached to F(0) by a central stalk formed by the gamma and epsilon chains, while a peripheral stalk is formed by the delta and b chains.

The protein resides in the cell membrane. F(1)F(0) ATP synthase produces ATP from ADP in the presence of a proton or sodium gradient. F-type ATPases consist of two structural domains, F(1) containing the extramembraneous catalytic core and F(0) containing the membrane proton channel, linked together by a central stalk and a peripheral stalk. During catalysis, ATP synthesis in the catalytic domain of F(1) is coupled via a rotary mechanism of the central stalk subunits to proton translocation. Its function is as follows. Component of the F(0) channel, it forms part of the peripheral stalk, linking F(1) to F(0). This is ATP synthase subunit b from Priestia megaterium (strain ATCC 12872 / QMB1551) (Bacillus megaterium).